The sequence spans 126 residues: Protein ApaG (126 aa).

Residues 2–126 (SQVESPIKIK…FRLAVPGIFQ (125 aa)) enclose the ApaG domain.

This is Protein ApaG from Shewanella frigidimarina (strain NCIMB 400).